Reading from the N-terminus, the 237-residue chain is Orotidine 5'-phosphate decarboxylase (237 aa).

Residues aspartate 17, lysine 39, 66-75 (DLKLHDIGNT), threonine 121, arginine 182, glutamine 191, glycine 211, and arginine 212 each bind substrate. Residue lysine 68 is the Proton donor of the active site.

Belongs to the OMP decarboxylase family. Type 1 subfamily. Homodimer.

The enzyme catalyses orotidine 5'-phosphate + H(+) = UMP + CO2. It participates in pyrimidine metabolism; UMP biosynthesis via de novo pathway; UMP from orotate: step 2/2. Functionally, catalyzes the decarboxylation of orotidine 5'-monophosphate (OMP) to uridine 5'-monophosphate (UMP). This is Orotidine 5'-phosphate decarboxylase from Bradyrhizobium diazoefficiens (strain JCM 10833 / BCRC 13528 / IAM 13628 / NBRC 14792 / USDA 110).